Reading from the N-terminus, the 755-residue chain is Leucine-rich repeat-containing protein 36 (755 aa).

LRR repeat units follow at residues 51–72 (SLRS…QYLC) and 73–94 (SLQE…SRLQ). One can recognise an LRRCT domain in the interval 107–146 (NPVVRKDTDYRLFAVYTLQTLEKLDDRAVRDSERRAAKLH). Disordered stretches follow at residues 354–374 (GKNY…TTSH) and 448–517 (LPPG…PPIS). Positions 356-370 (NYREHSIKPSQDKKA) are enriched in basic and acidic residues. Residues 498 to 510 (LSSDLGSLHGLSG) are compositionally biased toward low complexity. Residues 601–671 (VESLKQKLVK…ELTQLKRLEE (71 aa)) adopt a coiled-coil conformation. Positions 701–755 (YSGKSLLPPEKSHPLGRSSPFGKSTLSSSSPMVHDTGQYLIQSVSEADPEPSLWS) are disordered. Positions 721 to 731 (FGKSTLSSSSP) are enriched in polar residues.

The protein is Leucine-rich repeat-containing protein 36 (Lrrc36) of Mus musculus (Mouse).